We begin with the raw amino-acid sequence, 639 residues long: CTTNBP2 N-terminal-like protein (639 aa).

Residues 87–285 (MKQCKNMQER…DLEASHQHSS (199 aa)) are a coiled coil. 2 positions are modified to phosphoserine: S284 and S285. 3 disordered regions span residues 387–430 (VENG…PCSS), 463–490 (RHKF…LSPT), and 511–609 (RFTS…AASL). Composition is skewed to low complexity over residues 405-430 (PLSS…PCSS) and 467-477 (QSQADQDQQAS). Residues S481, S488, S523, S527, S560, S563, and S568 each carry the phosphoserine modification. The segment covering 511 to 529 (RFTSQQGPIKPVSPNSSPF) has biased composition (polar residues). 2 positions are modified to phosphothreonine: T570 and T590. Residues 587-600 (PGLTPSPSATTPLT) are compositionally biased toward low complexity. At S592 the chain carries Phosphoserine.

Interacts with CTTN/cortactin; this interaction may redistribute CTTN to stress fibers. May form homomers. Associates with the core of STRIPAK complexes composed of PP2A catalytic and scaffolding subunits, the striatins (PP2A regulatory subunits), the striatin-associated proteins MOB4, STRIP1 and STRIP2, PDCD10 and members of the STE20 kinases, such as STK24 and STK26.

Its subcellular location is the cell projection. The protein resides in the lamellipodium. It localises to the cytoplasm. It is found in the cytoskeleton. The protein localises to the stress fiber. Regulates lamellipodial actin dynamics in a CTTN-dependent manner. Associates with core striatin-interacting phosphatase and kinase (STRIPAK) complex to form CTTNBP2NL-STRIPAK complexes. STRIPAK complexes have critical roles in protein (de)phosphorylation and are regulators of multiple signaling pathways including Hippo, MAPK, nuclear receptor and cytoskeleton remodeling. Different types of STRIPAK complexes are involved in a variety of biological processes such as cell growth, differentiation, apoptosis, metabolism and immune regulation. This is CTTNBP2 N-terminal-like protein from Homo sapiens (Human).